The following is a 393-amino-acid chain: Dual-specificity RNA methyltransferase RlmN (393 aa).

The Proton acceptor role is filled by Glu114. The region spanning 120–359 (EDDRATLCVS…VIVRKTRGDD (240 aa)) is the Radical SAM core domain. An intrachain disulfide couples Cys127 to Cys364. Cys134, Cys138, and Cys141 together coordinate [4Fe-4S] cluster. S-adenosyl-L-methionine contacts are provided by residues 188 to 189 (GE), Ser220, 242 to 244 (SLH), and Asn321. Cys364 (S-methylcysteine intermediate) is an active-site residue.

This sequence belongs to the radical SAM superfamily. RlmN family. The cofactor is [4Fe-4S] cluster.

It localises to the cytoplasm. The catalysed reaction is adenosine(2503) in 23S rRNA + 2 reduced [2Fe-2S]-[ferredoxin] + 2 S-adenosyl-L-methionine = 2-methyladenosine(2503) in 23S rRNA + 5'-deoxyadenosine + L-methionine + 2 oxidized [2Fe-2S]-[ferredoxin] + S-adenosyl-L-homocysteine. It carries out the reaction adenosine(37) in tRNA + 2 reduced [2Fe-2S]-[ferredoxin] + 2 S-adenosyl-L-methionine = 2-methyladenosine(37) in tRNA + 5'-deoxyadenosine + L-methionine + 2 oxidized [2Fe-2S]-[ferredoxin] + S-adenosyl-L-homocysteine. Specifically methylates position 2 of adenine 2503 in 23S rRNA and position 2 of adenine 37 in tRNAs. m2A2503 modification seems to play a crucial role in the proofreading step occurring at the peptidyl transferase center and thus would serve to optimize ribosomal fidelity. The sequence is that of Dual-specificity RNA methyltransferase RlmN from Actinobacillus pleuropneumoniae serotype 5b (strain L20).